The primary structure comprises 64 residues: Movement protein TGBp3 (64 aa).

The Lumenal segment spans residues M1–D7. A helical membrane pass occupies residues L8–S28. At H29–H64 the chain is on the cytoplasmic side.

The protein belongs to the Tymovirales TGBp3 protein family.

It localises to the host endoplasmic reticulum membrane. Its function is as follows. Plays a role in viral cell-to-cell propagation, by facilitating genome transport to neighboring plant cells through plasmosdesmata. May induce the formation of granular vesicles derived from the Endoplasmic reticulum, which align on actin filaments. This chain is Movement protein TGBp3, found in Chrysanthemum morifolium (Florist's daisy).